Consider the following 67-residue polypeptide: uncharacterized protein (67 aa).

Residues 4–24 (WIFAILMLGVAIVLSIIATFF) form a helical membrane-spanning segment.

The protein localises to the membrane. This is an uncharacterized protein from Bacillus anthracis.